Consider the following 113-residue polypeptide: UPF0482 protein YnfB (113 aa).

The N-terminal stretch at 1 to 28 (MKITLSKRIGLLAFLLPCALALSTTVHA) is a signal peptide.

This sequence belongs to the UPF0482 family.

In Escherichia coli O127:H6 (strain E2348/69 / EPEC), this protein is UPF0482 protein YnfB.